The primary structure comprises 150 residues: Cytochrome b5 type B (150 aa).

A propeptide spanning residues 1–15 (MSGSMATAEASGSDG) is cleaved from the precursor. Residues 1-20 (MSGSMATAEASGSDGKGQEV) form a disordered region. At Ser23 the chain carries Phosphoserine. The Cytochrome b5 heme-binding domain maps to 24–100 (VTYYRLEEVA…LKQYYIGDIH (77 aa)). Residue Lys34 is modified to N6-acetyllysine. A Phosphoserine modification is found at Ser37. Lys39 bears the N6-methyllysine mark. His59 and His83 together coordinate heme. Ser84 is modified (phosphoserine). A helical transmembrane segment spans residues 123-140 (WAYWILPIIGAVLLGFLY).

This sequence belongs to the cytochrome b5 family. In terms of assembly, component of a complex composed of cytochrome b5, NADH-cytochrome b5 reductase (CYB5R3) and MTARC2.

It localises to the mitochondrion outer membrane. Cytochrome b5 is a membrane-bound hemoprotein functioning as an electron carrier for several membrane-bound oxygenases. In Homo sapiens (Human), this protein is Cytochrome b5 type B (CYB5B).